Reading from the N-terminus, the 156-residue chain is uncharacterized protein (156 aa).

The protein to L.lactis TrpF C-terminal region.

This is an uncharacterized protein from Bacillus subtilis (strain 168).